The sequence spans 242 residues: Glycerol-3-phosphate acyltransferase (242 aa).

6 consecutive transmembrane segments (helical) span residues 7–27, 61–81, 102–122, 135–155, 162–182, and 201–221; these read ISLL…IMFA, IAIG…ILLI, YYLT…PVYF, GFVF…WWTI, VSLA…IPWL, and DWYI…IIIW.

This sequence belongs to the PlsY family. Probably interacts with PlsX.

It localises to the cell membrane. It carries out the reaction an acyl phosphate + sn-glycerol 3-phosphate = a 1-acyl-sn-glycero-3-phosphate + phosphate. It participates in lipid metabolism; phospholipid metabolism. Catalyzes the transfer of an acyl group from acyl-phosphate (acyl-PO(4)) to glycerol-3-phosphate (G3P) to form lysophosphatidic acid (LPA). This enzyme utilizes acyl-phosphate as fatty acyl donor, but not acyl-CoA or acyl-ACP. The protein is Glycerol-3-phosphate acyltransferase of Mycoplasmoides gallisepticum (strain R(low / passage 15 / clone 2)) (Mycoplasma gallisepticum).